The following is a 71-amino-acid chain: uncharacterized protein (71 aa).

Belongs to the ycf40 family.

It is found in the plastid. The protein localises to the chloroplast. This is an uncharacterized protein from Porphyra purpurea (Red seaweed).